The chain runs to 237 residues: MTDHSSDKTALVLFSGGQDSATCLAWALARFARVETIGFDYGQRHLIELECRARLLDGFRAISDDWAAKLGDNHTLTIPTLAEISDTALTRDVAIAMGADGLPNTFVPGRNLIFLNFAAALAYRRGITDIVGGMCETDYSGYPDCRNDTIQALQTALSLGMARDITLHTPLMWRDKAATWQLAQDLGGDALVDLIREDSHTCYLGERGARHDWGYGCGECPACRLRSKGWIEYASGI.

An ATP-binding site is contributed by 14 to 24 (FSGGQDSATCL). Residues C202, C217, C220, and C223 each contribute to the Zn(2+) site.

Belongs to the QueC family. The cofactor is Zn(2+).

It catalyses the reaction 7-carboxy-7-deazaguanine + NH4(+) + ATP = 7-cyano-7-deazaguanine + ADP + phosphate + H2O + H(+). It participates in purine metabolism; 7-cyano-7-deazaguanine biosynthesis. Catalyzes the ATP-dependent conversion of 7-carboxy-7-deazaguanine (CDG) to 7-cyano-7-deazaguanine (preQ(0)). This chain is 7-cyano-7-deazaguanine synthase, found in Rhodopseudomonas palustris (strain TIE-1).